We begin with the raw amino-acid sequence, 199 residues long: Ras-related protein Rab-7b (199 aa).

Residues 15-22 (GAIGVGKT), 34-40 (YEEYQTT), 63-67 (DTGGQ), 124-127 (NKID), and 154-155 (AK) each bind GTP. 2 consecutive short sequence motifs (switch) follow at residues 28–41 (YVHKTFYEEYQTTL) and 67–82 (QERFRSMVSTFYKGSD). Ser186 carries the post-translational modification Phosphoserine. S-geranylgeranyl cysteine attachment occurs at residues Cys198 and Cys199.

This sequence belongs to the small GTPase superfamily. Rab family. In terms of tissue distribution, expressed in heart, placenta, lung, skeletal muscle and peripheral blood leukocyte.

It localises to the late endosome. It is found in the lysosome. The protein localises to the golgi apparatus. Its subcellular location is the trans-Golgi network. The protein resides in the cytoplasmic vesicle. It localises to the phagosome. It is found in the phagosome membrane. In terms of biological role, controls vesicular trafficking from endosomes to the trans-Golgi network (TGN). Acts as a negative regulator of TLR9 signaling and can suppress TLR9-triggered TNFA, IL6, and IFNB production in macrophages by promoting TLR9 lysosomal degradation. Also negatively regulates TLR4 signaling in macrophages by promoting lysosomal degradation of TLR4. Promotes megakaryocytic differentiation by increasing NF-kappa-B-dependent IL6 production and subsequently enhancing the association of STAT3 with GATA1. Not involved in the regulation of the EGF- and EGFR degradation pathway. This Homo sapiens (Human) protein is Ras-related protein Rab-7b (RAB7B).